Here is a 296-residue protein sequence, read N- to C-terminus: Homoserine kinase (296 aa).

86 to 96 (KAGSGLGSSAA) contributes to the ATP binding site.

It belongs to the GHMP kinase family. Homoserine kinase subfamily.

It localises to the cytoplasm. The enzyme catalyses L-homoserine + ATP = O-phospho-L-homoserine + ADP + H(+). It participates in amino-acid biosynthesis; L-threonine biosynthesis; L-threonine from L-aspartate: step 4/5. Functionally, catalyzes the ATP-dependent phosphorylation of L-homoserine to L-homoserine phosphate. The polypeptide is Homoserine kinase (thrB) (Methanocaldococcus jannaschii (strain ATCC 43067 / DSM 2661 / JAL-1 / JCM 10045 / NBRC 100440) (Methanococcus jannaschii)).